Here is a 431-residue protein sequence, read N- to C-terminus: Histidine--tRNA ligase (431 aa).

Belongs to the class-II aminoacyl-tRNA synthetase family. In terms of assembly, homodimer.

It localises to the cytoplasm. The catalysed reaction is tRNA(His) + L-histidine + ATP = L-histidyl-tRNA(His) + AMP + diphosphate + H(+). The sequence is that of Histidine--tRNA ligase from Neisseria meningitidis serogroup A / serotype 4A (strain DSM 15465 / Z2491).